We begin with the raw amino-acid sequence, 130 residues long: Small ribosomal subunit protein uS9 (130 aa).

A compositionally biased stretch (basic and acidic residues) spans 99 to 110; the sequence is KKAGFLTRDPRM. The segment at 99-130 is disordered; it reads KKAGFLTRDPRMKERKKYGLKKARRAPQFSKR. Residues 111-130 show a composition bias toward basic residues; it reads KERKKYGLKKARRAPQFSKR.

It belongs to the universal ribosomal protein uS9 family.

The chain is Small ribosomal subunit protein uS9 from Clostridium botulinum (strain Alaska E43 / Type E3).